We begin with the raw amino-acid sequence, 1141 residues long: DNA-directed RNA polymerase subunit beta (1141 aa).

Composition is skewed to acidic residues over residues 1063-1074 (EIEIKEDDDDVS) and 1096-1141 (GGNE…GDEE). Positions 1063-1141 (EIEIKEDDDD…VPDEAYGDEE (79 aa)) are disordered.

Belongs to the RNA polymerase beta chain family. In terms of assembly, the RNAP catalytic core consists of 2 alpha, 1 beta, 1 beta' and 1 omega subunit. When a sigma factor is associated with the core the holoenzyme is formed, which can initiate transcription.

The catalysed reaction is RNA(n) + a ribonucleoside 5'-triphosphate = RNA(n+1) + diphosphate. Functionally, DNA-dependent RNA polymerase catalyzes the transcription of DNA into RNA using the four ribonucleoside triphosphates as substrates. The polypeptide is DNA-directed RNA polymerase subunit beta (Moorella thermoacetica (strain ATCC 39073 / JCM 9320)).